Consider the following 428-residue polypeptide: Serine--tRNA ligase (428 aa).

235–237 (TAE) contributes to the L-serine binding site. Residue 266–268 (RSE) coordinates ATP. E289 serves as a coordination point for L-serine. 353-356 (EISS) is a binding site for ATP. S389 lines the L-serine pocket.

Belongs to the class-II aminoacyl-tRNA synthetase family. Type-1 seryl-tRNA synthetase subfamily. Homodimer. The tRNA molecule binds across the dimer.

The protein localises to the cytoplasm. The enzyme catalyses tRNA(Ser) + L-serine + ATP = L-seryl-tRNA(Ser) + AMP + diphosphate + H(+). The catalysed reaction is tRNA(Sec) + L-serine + ATP = L-seryl-tRNA(Sec) + AMP + diphosphate + H(+). It functions in the pathway aminoacyl-tRNA biosynthesis; selenocysteinyl-tRNA(Sec) biosynthesis; L-seryl-tRNA(Sec) from L-serine and tRNA(Sec): step 1/1. Catalyzes the attachment of serine to tRNA(Ser). Is also able to aminoacylate tRNA(Sec) with serine, to form the misacylated tRNA L-seryl-tRNA(Sec), which will be further converted into selenocysteinyl-tRNA(Sec). The chain is Serine--tRNA ligase from Shewanella amazonensis (strain ATCC BAA-1098 / SB2B).